A 927-amino-acid polypeptide reads, in one-letter code: Protein unc-45 homolog B (927 aa).

TPR repeat units lie at residues 4–37 (PVQL…ITDK), 41–74 (AVLY…DASD), and 76–108 (KALF…EPKN). 3 ARM repeats span residues 167–206 (DAGA…GMCT), 209–248 (RARA…NIVD), and 746–785 (DKLR…NLAL).

As to expression, detected initially throughout the somites and the heart and gradually also expressed in the jaw, branchial arches and body wall muscles at later embryonic stages.

Its subcellular location is the cytoplasm. The protein localises to the myofibril. It is found in the sarcomere. The protein resides in the z line. It localises to the a band. Its subcellular location is the perinuclear region. The protein localises to the cytosol. Its function is as follows. Acts as a co-chaperone for HSP90 and is required for proper folding of the myosin motor domain. Plays a role in sarcomere formation during muscle cell development. Is necessary for normal early lens development. The polypeptide is Protein unc-45 homolog B (Xenopus tropicalis (Western clawed frog)).